The following is a 195-amino-acid chain: Keratin-associated protein 4-11 (195 aa).

27 consecutive repeat copies span residues 5 to 9 (CCGSV), 24 to 28 (CCRPS), 29 to 33 (CCETT), 34 to 38 (CCRTT), 44 to 48 (CCVSS), 49 to 53 (CCRPQ), 54 to 58 (CCQSV), 59 to 63 (CCQPT), 64 to 68 (CCRPR), 69 to 73 (CCISS), 74 to 78 (CCRPS), 79 to 83 (CCVSS), 84 to 88 (CCKPQ), 89 to 93 (CCQSM), 94 to 98 (CCQPT), 99 to 103 (CCRPR), 104 to 108 (CCISS), 109 to 113 (CCRPS), 114 to 118 (CCVSS), 119 to 123 (CCRPQ), 124 to 128 (CCQSV), 129 to 133 (CCQPT), 134 to 138 (CCHPS), 144 to 148 (CCRPS), 149 to 153 (CCESS), 154 to 158 (CCRPC), and 159 to 163 (CCLRP). Residues 5 to 163 (CCGSVCSHQG…CCRPCCCLRP (159 aa)) form a 27 X 5 AA repeats of C-C-[GIKRQVHEL]-[SPTR]-[STVQRMC] region.

The protein belongs to the KRTAP type 4 family. Interacts with hair keratins. As to expression, expressed in the hair follicles.

In terms of biological role, in the hair cortex, hair keratin intermediate filaments are embedded in an interfilamentous matrix, consisting of hair keratin-associated proteins (KRTAP), which are essential for the formation of a rigid and resistant hair shaft through their extensive disulfide bond cross-linking with abundant cysteine residues of hair keratins. The matrix proteins include the high-sulfur and high-glycine-tyrosine keratins. This chain is Keratin-associated protein 4-11 (KRTAP4-11), found in Homo sapiens (Human).